Reading from the N-terminus, the 248-residue chain is NAD(P)H-quinone oxidoreductase subunit K (248 aa).

[4Fe-4S] cluster-binding residues include cysteine 66, cysteine 67, cysteine 131, and cysteine 162.

The protein belongs to the complex I 20 kDa subunit family. In terms of assembly, NDH-1 can be composed of about 15 different subunits; different subcomplexes with different compositions have been identified which probably have different functions. [4Fe-4S] cluster serves as cofactor.

It localises to the cellular thylakoid membrane. The catalysed reaction is a plastoquinone + NADH + (n+1) H(+)(in) = a plastoquinol + NAD(+) + n H(+)(out). It carries out the reaction a plastoquinone + NADPH + (n+1) H(+)(in) = a plastoquinol + NADP(+) + n H(+)(out). Its function is as follows. NDH-1 shuttles electrons from an unknown electron donor, via FMN and iron-sulfur (Fe-S) centers, to quinones in the respiratory and/or the photosynthetic chain. The immediate electron acceptor for the enzyme in this species is believed to be plastoquinone. Couples the redox reaction to proton translocation, and thus conserves the redox energy in a proton gradient. Cyanobacterial NDH-1 also plays a role in inorganic carbon-concentration. The protein is NAD(P)H-quinone oxidoreductase subunit K of Synechococcus sp. (strain WH7803).